Reading from the N-terminus, the 279-residue chain is NADPH-dependent 7-cyano-7-deazaguanine reductase (279 aa).

86–88 (IES) lines the substrate pocket. Residue 88-89 (SK) coordinates NADPH. Cys187 functions as the Thioimide intermediate in the catalytic mechanism. Asp194 acts as the Proton donor in catalysis. Substrate is bound at residue 226 to 227 (HE). 255–256 (RG) lines the NADPH pocket.

Belongs to the GTP cyclohydrolase I family. QueF type 2 subfamily. As to quaternary structure, homodimer.

The protein resides in the cytoplasm. The catalysed reaction is 7-aminomethyl-7-carbaguanine + 2 NADP(+) = 7-cyano-7-deazaguanine + 2 NADPH + 3 H(+). Its pathway is tRNA modification; tRNA-queuosine biosynthesis. Functionally, catalyzes the NADPH-dependent reduction of 7-cyano-7-deazaguanine (preQ0) to 7-aminomethyl-7-deazaguanine (preQ1). The protein is NADPH-dependent 7-cyano-7-deazaguanine reductase of Actinobacillus pleuropneumoniae serotype 7 (strain AP76).